A 42-amino-acid chain; its full sequence is Tachystatin-B2 (42 aa).

3 disulfides stabilise this stretch: cysteine 4–cysteine 20, cysteine 11–cysteine 25, and cysteine 19–cysteine 37.

In terms of tissue distribution, granular hemocytes, small secretory granules.

Its subcellular location is the secreted. In terms of biological role, exhibits stronger antimicrobial activity against the Gram-positive bacteria (S.aureus (IC(50) is 7.4 ug/ml)) and fungi (C.albicans (IC(50) is 3.0 ug/ml) and P.pastoris (IC(50) is 0.1 ug/ml)) than Gram-negative bacteria (E.coli no inhibition at 100 ug/ml). Binds to chitin (4.3 uM are required to obtain 50% of binding). Does not cause hemolysis on sheep erythrocytes. Has no blocking activity on the P-type calcium channel. The polypeptide is Tachystatin-B2 (Tachypleus tridentatus (Japanese horseshoe crab)).